Here is a 364-residue protein sequence, read N- to C-terminus: MAHNLLNDTFLRALLREPTDYTPIWLMRQAGRYLPEYNATRARAGSFLGLAKNPDYATEVTLQPLERFPLDAAILFSDILTIPDAMGLGLDFQVGEGPKFAHPVRTEADVAKLAVPDIEATLGYVTGAVREIRRALTDAQGRQRVPLIGFSGSPWTLACYMVEGGGSDDFRTVKSMAYSRPDLMHRILDVNAQAVAAYLNAQIEAGAQAVMIFDTWGGALADGAYQRFSLDYIRRVVSQLKREHDGERVPVITFTKGGGLWLEEIAATGVDAVGLDWTVNLGAARERVAGRVALQGNLDPTILFAPPAAVREQARAVLDSYGNHPGHVFNLGHGISQFTSPDHVAELVDEVHTHSRAIRSGAAG.

Residues 28 to 32, Asp78, Tyr160, Thr215, and His333 each bind substrate; that span reads RQAGR.

It belongs to the uroporphyrinogen decarboxylase family. As to quaternary structure, homodimer.

It is found in the cytoplasm. The catalysed reaction is uroporphyrinogen III + 4 H(+) = coproporphyrinogen III + 4 CO2. Its pathway is porphyrin-containing compound metabolism; protoporphyrin-IX biosynthesis; coproporphyrinogen-III from 5-aminolevulinate: step 4/4. Catalyzes the decarboxylation of four acetate groups of uroporphyrinogen-III to yield coproporphyrinogen-III. This chain is Uroporphyrinogen decarboxylase, found in Burkholderia cenocepacia (strain ATCC BAA-245 / DSM 16553 / LMG 16656 / NCTC 13227 / J2315 / CF5610) (Burkholderia cepacia (strain J2315)).